We begin with the raw amino-acid sequence, 164 residues long: V-type proton ATPase subunit c' (164 aa).

Residues 1–15 (MTDDLVNEYAPAFAP) lie on the Lumenal side of the membrane. The chain crosses the membrane as a helical span at residues 16-36 (FFGFAGCAAAMILSSLGAAIG). The Cytoplasmic portion of the chain corresponds to 37 to 58 (TAKSGIGISGIGTFRPELIMKS). The helical transmembrane segment at 59-79 (LIPVVMSGILAVYGLVVAVLV) threads the bilayer. Topologically, residues 80–97 (AGGLSPTEEYTLFNGFMH) are lumenal. A helical transmembrane segment spans residues 98 to 118 (LAAGLCVGFACLSSGYAIGIV). Topologically, residues 119-135 (GDVGVRKFMHQPRLFVG) are cytoplasmic. The chain crosses the membrane as a helical span at residues 136 to 156 (IVLILIFAEVLGLYGMIIALI). At 157–164 (LNTRGSGN) the chain is on the lumenal side.

The protein belongs to the V-ATPase proteolipid subunit family. As to quaternary structure, V-ATPase is a heteromultimeric enzyme composed of a peripheral catalytic V1 complex (components A to H) attached to an integral membrane V0 proton pore complex (components: a, c, c', c'', d, e, f and VOA1). The decameric c-ring forms the proton-conducting pore, and is composed of eight proteolipid subunits c, one subunit c' and one subunit c''.

The protein localises to the vacuole membrane. Functionally, proton-conducting pore forming subunit of the V0 complex of vacuolar(H+)-ATPase (V-ATPase), a multisubunit enzyme composed of a peripheral complex (V1) that hydrolyzes ATP and a membrane integral complex (V0) that translocates protons. V-ATPase is responsible for acidifying and maintaining the pH of intracellular compartments. The chain is V-type proton ATPase subunit c' (VMA11) from Eremothecium gossypii (strain ATCC 10895 / CBS 109.51 / FGSC 9923 / NRRL Y-1056) (Yeast).